Consider the following 77-residue polypeptide: MKKQNLIEMEGVVTESLPNAMFRVYLDNGCEVLAHISGKIRRNYIRILLADRVKVELSPYDLTKGRITYRLRTKSNG.

In terms of domain architecture, S1-like spans M1 to R72.

This sequence belongs to the IF-1 family. In terms of assembly, component of the 30S ribosomal translation pre-initiation complex which assembles on the 30S ribosome in the order IF-2 and IF-3, IF-1 and N-formylmethionyl-tRNA(fMet); mRNA recruitment can occur at any time during PIC assembly.

The protein localises to the plastid. The protein resides in the chloroplast. Its function is as follows. One of the essential components for the initiation of protein synthesis. Stabilizes the binding of IF-2 and IF-3 on the 30S subunit to which N-formylmethionyl-tRNA(fMet) subsequently binds. Helps modulate mRNA selection, yielding the 30S pre-initiation complex (PIC). Upon addition of the 50S ribosomal subunit IF-1, IF-2 and IF-3 are released leaving the mature 70S translation initiation complex. The sequence is that of Translation initiation factor IF-1, chloroplastic from Zygnema circumcarinatum (Green alga).